The sequence spans 179 residues: Large ribosomal subunit protein uL6 (179 aa).

Belongs to the universal ribosomal protein uL6 family. Part of the 50S ribosomal subunit.

Its function is as follows. This protein binds to the 23S rRNA, and is important in its secondary structure. It is located near the subunit interface in the base of the L7/L12 stalk, and near the tRNA binding site of the peptidyltransferase center. The protein is Large ribosomal subunit protein uL6 of Mycobacteroides abscessus (strain ATCC 19977 / DSM 44196 / CCUG 20993 / CIP 104536 / JCM 13569 / NCTC 13031 / TMC 1543 / L948) (Mycobacterium abscessus).